Consider the following 419-residue polypeptide: UDP-N-acetylglucosamine 1-carboxyvinyltransferase (419 aa).

22–23 lines the phosphoenolpyruvate pocket; that stretch reads KN. Residue R93 coordinates UDP-N-acetyl-alpha-D-glucosamine. C117 acts as the Proton donor in catalysis. Residue C117 is modified to 2-(S-cysteinyl)pyruvic acid O-phosphothioketal. The UDP-N-acetyl-alpha-D-glucosamine site is built by D307 and I329.

The protein belongs to the EPSP synthase family. MurA subfamily.

Its subcellular location is the cytoplasm. It catalyses the reaction phosphoenolpyruvate + UDP-N-acetyl-alpha-D-glucosamine = UDP-N-acetyl-3-O-(1-carboxyvinyl)-alpha-D-glucosamine + phosphate. Its pathway is cell wall biogenesis; peptidoglycan biosynthesis. Functionally, cell wall formation. Adds enolpyruvyl to UDP-N-acetylglucosamine. The sequence is that of UDP-N-acetylglucosamine 1-carboxyvinyltransferase from Shewanella sp. (strain ANA-3).